A 651-amino-acid polypeptide reads, in one-letter code: Acetyl-coenzyme A synthetase (651 aa).

Residues 189 to 192 (RGGK), T311, and N335 contribute to the CoA site. Residues 387-389 (GEP), 411-416 (DTWWQT), D500, and R515 each bind ATP. S523 lines the CoA pocket. Residue R526 coordinates ATP. Mg(2+) contacts are provided by V537, H539, and V542. A CoA-binding site is contributed by R584. At K609 the chain carries N6-acetyllysine.

Belongs to the ATP-dependent AMP-binding enzyme family. Requires Mg(2+) as cofactor. Acetylated. Deacetylation by the SIR2-homolog deacetylase activates the enzyme.

It catalyses the reaction acetate + ATP + CoA = acetyl-CoA + AMP + diphosphate. Its function is as follows. Catalyzes the conversion of acetate into acetyl-CoA (AcCoA), an essential intermediate at the junction of anabolic and catabolic pathways. AcsA undergoes a two-step reaction. In the first half reaction, AcsA combines acetate with ATP to form acetyl-adenylate (AcAMP) intermediate. In the second half reaction, it can then transfer the acetyl group from AcAMP to the sulfhydryl group of CoA, forming the product AcCoA. In Rhizobium etli (strain CIAT 652), this protein is Acetyl-coenzyme A synthetase.